Here is a 348-residue protein sequence, read N- to C-terminus: sn-glycerol-3-phosphate import ATP-binding protein UgpC (348 aa).

One can recognise an ABC transporter domain in the interval 4–235 (IQLSNIKKQY…PETTFVADFI (232 aa)). 37-44 (GPSGCGKS) is an ATP binding site.

This sequence belongs to the ABC transporter superfamily. sn-glycerol-3-phosphate importer (TC 3.A.1.1.3) family. In terms of assembly, the complex is composed of two ATP-binding proteins (UgpC), two transmembrane proteins (UgpA and UgpE) and a solute-binding protein (UgpB).

The protein resides in the cell inner membrane. It catalyses the reaction sn-glycerol 3-phosphate(out) + ATP + H2O = sn-glycerol 3-phosphate(in) + ADP + phosphate + H(+). Functionally, part of the ABC transporter complex UgpBAEC involved in sn-glycerol-3-phosphate (G3P) import. Responsible for energy coupling to the transport system. The protein is sn-glycerol-3-phosphate import ATP-binding protein UgpC of Bartonella quintana (strain Toulouse) (Rochalimaea quintana).